The primary structure comprises 196 residues: dCTP deaminase, dUMP-forming (196 aa).

DCTP-binding positions include 101–106 (KSSLGR), Asp-119, 127–129 (TLE), Gln-148, Tyr-162, and Gln-174. Glu-129 serves as the catalytic Proton donor/acceptor.

This sequence belongs to the dCTP deaminase family. As to quaternary structure, homotrimer.

The catalysed reaction is dCTP + 2 H2O = dUMP + NH4(+) + diphosphate. It participates in pyrimidine metabolism; dUMP biosynthesis; dUMP from dCTP: step 1/1. Its function is as follows. Bifunctional enzyme that catalyzes both the deamination of dCTP to dUTP and the hydrolysis of dUTP to dUMP without releasing the toxic dUTP intermediate. The sequence is that of dCTP deaminase, dUMP-forming from Tropheryma whipplei (strain TW08/27) (Whipple's bacillus).